The following is a 239-amino-acid chain: Aspartate/glutamate leucyltransferase (239 aa).

Belongs to the R-transferase family. Bpt subfamily.

It localises to the cytoplasm. The enzyme catalyses N-terminal L-glutamyl-[protein] + L-leucyl-tRNA(Leu) = N-terminal L-leucyl-L-glutamyl-[protein] + tRNA(Leu) + H(+). It catalyses the reaction N-terminal L-aspartyl-[protein] + L-leucyl-tRNA(Leu) = N-terminal L-leucyl-L-aspartyl-[protein] + tRNA(Leu) + H(+). In terms of biological role, functions in the N-end rule pathway of protein degradation where it conjugates Leu from its aminoacyl-tRNA to the N-termini of proteins containing an N-terminal aspartate or glutamate. In Campylobacter jejuni subsp. jejuni serotype O:23/36 (strain 81-176), this protein is Aspartate/glutamate leucyltransferase.